Reading from the N-terminus, the 175-residue chain is uncharacterized protein (175 aa).

Low complexity predominate over residues 35 to 56 (LIENSNYDNNNINNNNNNNNTD). The segment at 35-70 (LIENSNYDNNNINNNNNNNNTDNDNDNNNDNEPFYN) is disordered. 2 helical membrane-spanning segments follow: residues 106 to 126 (ILSF…FFNY) and 132 to 152 (YFII…KSIF).

The protein resides in the membrane. This is an uncharacterized protein from Dictyostelium discoideum (Social amoeba).